Consider the following 133-residue polypeptide: MDPRLYRLIRFPSNGLGNNNNDPNQQRGERPRQPHPDLGWILDAPNEPPRNRNPLLYLVTAPPRPRKKRSFMTTSKPFRIQTNVSDLQYNAWQAIQDAPPEKRCEYYVKYMDEHMNSQNYPNGVGLPHRWGQF.

Positions Phe-11–Tyr-57 are disordered. Low complexity predominate over residues Asn-14–Asn-24. The N-linked (GlcNAc...) asparagine glycan is linked to Asn-83.

Belongs to the male-specific scotti family.

In terms of biological role, post-meiotically transcribed gene that has a role in late spermiogenesis; required for actin cone progression during spermatid individualization. This chain is Male-specific protein scotti, found in Drosophila persimilis (Fruit fly).